Consider the following 700-residue polypeptide: Beta-galactosidase BgaB (700 aa).

Positions 122 and 160 each coordinate substrate. The active-site Proton donor is Glu-161. The Nucleophile role is filled by Glu-320. Substrate-binding positions include Trp-328 and 368–371; that span reads EAFH.

It belongs to the glycosyl hydrolase 42 family. In terms of assembly, trimer. Tetramer. In terms of processing, the N-terminus is blocked.

It catalyses the reaction Hydrolysis of terminal non-reducing beta-D-galactose residues in beta-D-galactosides.. With respect to regulation, inhibited by high substrate concentrations (100 mg/ml). No effect on activity with various EDTA concentrations (0-1 mM). 20-fold higher activity when cells grown on TOS than when cells grown on galactose, glucose and lactose. Its function is as follows. Involved in the hydrolysis of transgalactooligosaccharides (TOS). Highly active towards Gal(beta1-4)Gal and Gal(beta1-4)-Gal-containing oligosaccharides. Low activity towards Gal(beta1-3)Gal, lactose and Gal(beta1-3)GalOMe. No activity towards Gal(beta1-6)Gal, Gal(beta1-4)Man, Gal(alpha1-4)Gal, Gal(alpha1-3)Gal(beta1-4)Gal, lactulose, 3'fucosyllactose, lacto-N-fucopentaose I, lacto-N-fucopentaose II, cellobiose, maltose or sucrose. No transglycosylation activity is found at high substrate concentrations (100 mg/ml) and only low transglycosylation activity at lower substrate concentrations (10 mg/ml). The sequence is that of Beta-galactosidase BgaB (bgaB) from Bifidobacterium adolescentis (strain ATCC 15703 / DSM 20083 / NCTC 11814 / E194a).